Reading from the N-terminus, the 172-residue chain is Adenine phosphoribosyltransferase (172 aa).

This sequence belongs to the purine/pyrimidine phosphoribosyltransferase family. In terms of assembly, homodimer.

Its subcellular location is the cytoplasm. It carries out the reaction AMP + diphosphate = 5-phospho-alpha-D-ribose 1-diphosphate + adenine. The protein operates within purine metabolism; AMP biosynthesis via salvage pathway; AMP from adenine: step 1/1. Functionally, catalyzes a salvage reaction resulting in the formation of AMP, that is energically less costly than de novo synthesis. This chain is Adenine phosphoribosyltransferase, found in Synechocystis sp. (strain ATCC 27184 / PCC 6803 / Kazusa).